The following is a 634-amino-acid chain: Lamin tail domain-containing protein 2 (634 aa).

The tract at residues 1–44 (MRWLRPAGRRREQESVSGHLGPPAGAPAAPETPTCLPDTTPHPA) is disordered. Positions 106 to 169 (SHSQEKLLQN…QKSCLLQLAR (64 aa)) form a coiled coil. Over residues 228–237 (FTNMEPSSKQ) the composition is skewed to polar residues. Disordered stretches follow at residues 228–349 (FTNM…TDPD) and 464–575 (HRIP…PAEA). The segment covering 276 to 287 (SSSGGADSDSSS) has biased composition (low complexity). The segment covering 310 to 321 (SEQALVQAGSYS) has biased composition (polar residues). A compositionally biased stretch (basic and acidic residues) spans 322-337 (RDSEDLQKTHSPRHGE). Residues 350 to 468 (HWSPELLQSP…EVLSEHRIPR (119 aa)) enclose the LTD domain. Positions 502-513 (PPRPPRPLRKGR) are enriched in basic residues. A compositionally biased stretch (basic and acidic residues) spans 540–550 (HAREGPARPEN).

This chain is Lamin tail domain-containing protein 2 (LMNTD2), found in Homo sapiens (Human).